The primary structure comprises 178 residues: Peptidyl-prolyl cis-trans isomerase (178 aa).

An N-terminal signal peptide occupies residues 1–17; that stretch reads MKLLFFFLVLAVSAAVA. Residues 26–177 enclose the PPIase cyclophilin-type domain; sequence FMDIEIDGES…KIAKITDIGL (152 aa).

This sequence belongs to the cyclophilin-type PPIase family. PPIase A subfamily.

The enzyme catalyses [protein]-peptidylproline (omega=180) = [protein]-peptidylproline (omega=0). In terms of biological role, PPIases accelerate the folding of proteins. It catalyzes the cis-trans isomerization of proline imidic peptide bonds in oligopeptides. Up-regulates interferon gamma production by bovine T-cells. Stimulates high levels of IFN-gamma production by peripheral blood mononuclear cells and T-cells. The IFN-gamma-inducing effect is blocked by cyclosporin A (CsA). This chain is Peptidyl-prolyl cis-trans isomerase, found in Neospora caninum (Coccidian parasite).